The primary structure comprises 373 residues: P2Y purinoceptor 1 (373 aa).

Topologically, residues 1–51 (MTEVLWPAVPNGTDTAFLADPGSPWGNSTVTSTAAVASPFKCALTKTGFQF) are extracellular. N-linked (GlcNAc...) asparagine glycosylation is found at Asn-11 and Asn-27. 2 disulfides stabilise this stretch: Cys-42/Cys-296 and Cys-124/Cys-202. Lys-46 provides a ligand contact to ADP. The helical transmembrane segment at 52–74 (YYLPAVYILVFIIGFLGNSVAIW) threads the bilayer. Topologically, residues 75–87 (MFVFHMKPWSGIS) are cytoplasmic. The chain crosses the membrane as a helical span at residues 88–109 (VYMFNLALADFLYVLTLPALIF). The Extracellular segment spans residues 110-125 (YYFNKTDWIFGDAMCK). Asn-113 is a glycosylation site (N-linked (GlcNAc...) asparagine). The chain crosses the membrane as a helical span at residues 126 to 147 (LQRFIFHVNLYGSILFLTCISA). The Cytoplasmic portion of the chain corresponds to 148 to 166 (HRYSGVVYPLKSLGRLKKK). A helical membrane pass occupies residues 167–188 (NAVYISVLVWLIVVVGISPILF). The Extracellular segment spans residues 189–214 (YSGTGIRKNKTITCYDTTSDEYLRSY). A glycan (N-linked (GlcNAc...) asparagine) is linked at Asn-197. 203-205 (YDT) lines the ADP pocket. Residues 215–237 (FIYSMCTTVAMFCVPLVLILGCY) traverse the membrane as a helical segment. Residues 238–260 (GLIVRALIYKDLDNSPLRRKSIY) are Cytoplasmic-facing. The chain crosses the membrane as a helical span at residues 261 to 284 (LVIIVLTVFAVSYIPFHVMKTMNL). ADP is bound by residues 283–287 (NLRAR), 303–306 (YATY), and Arg-310. Residues 285–303 (RARLDFQTPEMCAFNDRVY) lie on the Extracellular side of the membrane. The chain crosses the membrane as a helical span at residues 304 to 325 (ATYQVTRGLASLNSCVDPILYF). Residues 326-373 (LAGDTFRRRLSRATRKASRRSEANLQSKSEDMTLNILSEFKQNGDTSL) are Cytoplasmic-facing.

The protein belongs to the G-protein coupled receptor 1 family.

The protein resides in the cell membrane. In terms of biological role, receptor for extracellular adenine nucleotides such as ADP. In platelets, binding to ADP leads to mobilization of intracellular calcium ions via activation of phospholipase C, a change in platelet shape, and ultimately platelet aggregation. The protein is P2Y purinoceptor 1 (P2RY1) of Bos taurus (Bovine).